The following is a 274-amino-acid chain: 2,3,4,5-tetrahydropyridine-2,6-dicarboxylate N-succinyltransferase (274 aa).

The substrate site is built by Arg-107 and Asp-144.

This sequence belongs to the transferase hexapeptide repeat family. In terms of assembly, homotrimer.

The protein resides in the cytoplasm. It carries out the reaction (S)-2,3,4,5-tetrahydrodipicolinate + succinyl-CoA + H2O = (S)-2-succinylamino-6-oxoheptanedioate + CoA. The protein operates within amino-acid biosynthesis; L-lysine biosynthesis via DAP pathway; LL-2,6-diaminopimelate from (S)-tetrahydrodipicolinate (succinylase route): step 1/3. In Cereibacter sphaeroides (strain ATCC 17023 / DSM 158 / JCM 6121 / CCUG 31486 / LMG 2827 / NBRC 12203 / NCIMB 8253 / ATH 2.4.1.) (Rhodobacter sphaeroides), this protein is 2,3,4,5-tetrahydropyridine-2,6-dicarboxylate N-succinyltransferase.